The primary structure comprises 331 residues: Protein MGF 300-4L (331 aa).

It belongs to the asfivirus MGF 300 family.

The sequence is that of Protein MGF 300-4L from African swine fever virus (isolate Tick/Malawi/Lil 20-1/1983) (ASFV).